Reading from the N-terminus, the 20-residue chain is Ranalexin-1Ca (20 aa).

Residues Cys14 and Cys20 are joined by a disulfide bond.

In terms of tissue distribution, expressed by the skin glands.

Its subcellular location is the secreted. In terms of biological role, antibacterial activity against Gram-positive bacterium S.aureus (MIC=17 uM) and Gram-negative bacterium E.coli (MIC=4 uM). Has activity against C.albicans (MIC=14 uM). This Lithobates clamitans (Green frog) protein is Ranalexin-1Ca.